The sequence spans 327 residues: Beta-ketoacyl-[acyl-carrier-protein] synthase III (327 aa).

Residues C112 and H253 contribute to the active site. The ACP-binding stretch occupies residues 254-258 (QANER). Residue N283 is part of the active site.

It belongs to the thiolase-like superfamily. FabH family. As to quaternary structure, homodimer.

It localises to the cytoplasm. It carries out the reaction malonyl-[ACP] + acetyl-CoA + H(+) = 3-oxobutanoyl-[ACP] + CO2 + CoA. It functions in the pathway lipid metabolism; fatty acid biosynthesis. Catalyzes the condensation reaction of fatty acid synthesis by the addition to an acyl acceptor of two carbons from malonyl-ACP. Catalyzes the first condensation reaction which initiates fatty acid synthesis and may therefore play a role in governing the total rate of fatty acid production. Possesses both acetoacetyl-ACP synthase and acetyl transacylase activities. Its substrate specificity determines the biosynthesis of branched-chain and/or straight-chain of fatty acids. This is Beta-ketoacyl-[acyl-carrier-protein] synthase III from Chlamydia muridarum (strain MoPn / Nigg).